A 274-amino-acid polypeptide reads, in one-letter code: Thiamine kinase (274 aa).

This sequence belongs to the thiamine kinase family.

It catalyses the reaction thiamine + ATP = thiamine phosphate + ADP + H(+). Its pathway is cofactor biosynthesis; thiamine diphosphate biosynthesis; thiamine phosphate from thiamine: step 1/1. Catalyzes the ATP-dependent phosphorylation of thiamine to thiamine phosphate. Is involved in thiamine salvage. In Salmonella newport (strain SL254), this protein is Thiamine kinase.